Reading from the N-terminus, the 265-residue chain is Cell adhesion molecule CEACAM7 (265 aa).

The signal sequence occupies residues 1-35; that stretch reads MGSPSACPYRVCIPWQGLLLTASLLTFWNLPNSAQ. Residues 36 to 142 enclose the Ig-like V-type domain; the sequence is TNIDVVPFNV…EEVTRQFYVF (107 aa). Residues Asn57, Asn85, Asn105, Asn112, Asn174, Asn183, and Asn198 are each glycosylated (N-linked (GlcNAc...) asparagine). The 88-residue stretch at 146 to 233 folds into the Ig-like C2-type domain; sequence PKPSITSNNF…ASRSDPVTLN (88 aa). Cys168 and Cys216 are disulfide-bonded. Ser242 carries the GPI-anchor amidated serine lipid modification. A propeptide spans 243–265 (removed in mature form); it reads SPDLSAGTAVSIMIGVLAGMALI.

The protein belongs to the immunoglobulin superfamily. CEA family. Homodimer. As to expression, expressed in columnar epithelial cells of the colon (at protein level). Strongly down-regulated in colonic adenocarcinomas.

The protein resides in the cell membrane. The protein localises to the apical cell membrane. This chain is Cell adhesion molecule CEACAM7, found in Homo sapiens (Human).